We begin with the raw amino-acid sequence, 148 residues long: Receptor activity-modifying protein 1 (148 aa).

A signal peptide spans 1–26; the sequence is MARALCRLPRRGLWLLLAHHLFMTTA. 3 disulfides stabilise this stretch: cysteine 27-cysteine 82, cysteine 40-cysteine 72, and cysteine 57-cysteine 104. Residues 27-118 are Extracellular-facing; that stretch reads CQEANYGALL…RAVRDPPGSI (92 aa). A helical transmembrane segment spans residues 119 to 140; it reads LYPFIVVPITVTLLVTALVVWQ. Over 141–148 the chain is Cytoplasmic; that stretch reads SKRTEGIV.

The protein belongs to the RAMP family. Heterodimer of CALCRL and RAMP1; the interaction induces allosteric modulation of CALCRL function and CGRP1/CALCA and CGRP2/CALCB ligand specificity. Heterodimer of CALCR and RAMP1; interaction forms the AMYR1 receptor complex for amylin/IAPP and CGRP1/CALCA ligands. In terms of tissue distribution, expressed in many tissues including the uterus, bladder, brain, pancreas and gastro-intestinal tract.

The protein localises to the cell membrane. Accessory protein that interacts with and modulates the function of G-protein coupled receptors including calcitonin gene-related peptide type 1 receptor (CALCRL) and calcitonin receptor (CALCR). Required for the transport of CALCRL to the plasma membrane. Together with CALCRL, form the receptor complex for the calcitonin gene-related peptides CGRP1/CALCA and CGRP2/CALCB. Together with CALCR, form the AMYR1 receptor complex for amylin/IAPP and CGRP1/CALCA. In Homo sapiens (Human), this protein is Receptor activity-modifying protein 1.